We begin with the raw amino-acid sequence, 114 residues long: T cell receptor beta variable 4-2 (114 aa).

The N-terminal stretch at 1–21 is a signal peptide; that stretch reads MGCRLLCCAVLCLLGAVPMET. The 93-residue stretch at 22–114 folds into the Ig-like domain; the sequence is GVTQTPRHLV…SALYLCASSQ (93 aa). Cysteine 42 and cysteine 110 form a disulfide bridge. 2 N-linked (GlcNAc...) asparagine glycosylation sites follow: asparagine 76 and asparagine 89.

In terms of assembly, alpha-beta TR is a heterodimer composed of an alpha and beta chain; disulfide-linked. The alpha-beta TR is associated with the transmembrane signaling CD3 coreceptor proteins to form the TR-CD3 (TcR or TCR). The assembly of alpha-beta TR heterodimers with CD3 occurs in the endoplasmic reticulum where a single alpha-beta TR heterodimer associates with one CD3D-CD3E heterodimer, one CD3G-CD3E heterodimer and one CD247 homodimer forming a stable octameric structure. CD3D-CD3E and CD3G-CD3E heterodimers preferentially associate with TR alpha and TR beta chains, respectively. The association of the CD247 homodimer is the last step of TcR assembly in the endoplasmic reticulum and is required for transport to the cell surface.

It localises to the cell membrane. V region of the variable domain of T cell receptor (TR) beta chain that participates in the antigen recognition. Alpha-beta T cell receptors are antigen specific receptors which are essential to the immune response and are present on the cell surface of T lymphocytes. Recognize peptide-major histocompatibility (MH) (pMH) complexes that are displayed by antigen presenting cells (APC), a prerequisite for efficient T cell adaptive immunity against pathogens. Binding of alpha-beta TR to pMH complex initiates TR-CD3 clustering on the cell surface and intracellular activation of LCK that phosphorylates the ITAM motifs of CD3G, CD3D, CD3E and CD247 enabling the recruitment of ZAP70. In turn ZAP70 phosphorylates LAT, which recruits numerous signaling molecules to form the LAT signalosome. The LAT signalosome propagates signal branching to three major signaling pathways, the calcium, the mitogen-activated protein kinase (MAPK) kinase and the nuclear factor NF-kappa-B (NF-kB) pathways, leading to the mobilization of transcription factors that are critical for gene expression and essential for T cell growth and differentiation. The T cell repertoire is generated in the thymus, by V-(D)-J rearrangement. This repertoire is then shaped by intrathymic selection events to generate a peripheral T cell pool of self-MH restricted, non-autoaggressive T cells. Post-thymic interaction of alpha-beta TR with the pMH complexes shapes TR structural and functional avidity. In Homo sapiens (Human), this protein is T cell receptor beta variable 4-2.